Here is a 334-residue protein sequence, read N- to C-terminus: Glycerol-3-phosphate dehydrogenase [NAD(P)+] (334 aa).

NADPH contacts are provided by Trp13, Arg33, and Lys106. Positions 106, 137, and 139 each coordinate sn-glycerol 3-phosphate. Residue Ala141 coordinates NADPH. Sn-glycerol 3-phosphate-binding residues include Lys192, Asp245, Ser255, Arg256, and Asn257. Lys192 acts as the Proton acceptor in catalysis. An NADPH-binding site is contributed by Arg256. Val280 and Glu282 together coordinate NADPH.

Belongs to the NAD-dependent glycerol-3-phosphate dehydrogenase family.

It is found in the cytoplasm. The catalysed reaction is sn-glycerol 3-phosphate + NAD(+) = dihydroxyacetone phosphate + NADH + H(+). It carries out the reaction sn-glycerol 3-phosphate + NADP(+) = dihydroxyacetone phosphate + NADPH + H(+). Its pathway is membrane lipid metabolism; glycerophospholipid metabolism. In terms of biological role, catalyzes the reduction of the glycolytic intermediate dihydroxyacetone phosphate (DHAP) to sn-glycerol 3-phosphate (G3P), the key precursor for phospholipid synthesis. This Chlamydia abortus (strain DSM 27085 / S26/3) (Chlamydophila abortus) protein is Glycerol-3-phosphate dehydrogenase [NAD(P)+].